A 71-amino-acid polypeptide reads, in one-letter code: Protein PSY3 (71 aa).

An N-terminal signal peptide occupies residues 1–25 (MGYSSSSRIGLCLFLFFTFALLSSA). Residues 26 to 49 (RISLSFSENEMTVVPERSLMVSTN) constitute a propeptide that is removed on maturation. Residues 47 to 71 (STNDYSDPTANGRHDPPRGGRGRRR) form a disordered region. Tyr51 carries the sulfotyrosine modification. At Pro63 the chain carries 4-hydroxyproline. O-linked (Ara...) hydroxyproline glycosylation is present at Pro63. The propeptide occupies 66-71 (GRGRRR).

Belongs to the sulfated-peptide plant hormone family. The sulfation and the glycosylation are required for full activity.

It is found in the secreted. Promotes cellular proliferation and expansion. In Arabidopsis thaliana (Mouse-ear cress), this protein is Protein PSY3 (PSY3).